A 132-amino-acid chain; its full sequence is Small ribosomal subunit protein uS8 (132 aa).

This sequence belongs to the universal ribosomal protein uS8 family. As to quaternary structure, part of the 30S ribosomal subunit. Contacts proteins S5 and S12.

Functionally, one of the primary rRNA binding proteins, it binds directly to 16S rRNA central domain where it helps coordinate assembly of the platform of the 30S subunit. The polypeptide is Small ribosomal subunit protein uS8 (Streptococcus pyogenes serotype M1).